We begin with the raw amino-acid sequence, 329 residues long: MQTILTDQASFNILTSKRNLINKLTITNIVLWALFVFCAIATAFLAISHSFHKNFSFFLESGNSNNEGETTTKVNIHVLVAQILTPIFTVLLILCWMGNIGINSLLFGQLSICQQFQNEKKWLLWAIFIPQLTLTNSLLVREKLKNILDANSNSSTQKNRLTWWMIGFFVVWFIQLFLGFLIYLPAYSAEARLNLNLSFLSFALNSPLPVGHAANGYFFLGLIFAFMDLTIIVLLVISGFILKHLIQTNKTEHKKYQLMFFWTALAIDVIGLIMTISFIVVSFSLEKGDDYLLKTPFFGSSLMALITIATLVTTILLFIRFNKKRLLKD.

The next 7 helical transmembrane spans lie at 29–49, 78–98, 120–140, 164–184, 217–237, 260–280, and 299–319; these read IVLW…AISH, VLVA…CWMG, KKWL…SLLV, WMIG…LIYL, YFFL…LLVI, FFWT…SFIV, and GSSL…LLFI.

To M.pneumoniae MPN_129.

Its subcellular location is the cell membrane. This is an uncharacterized protein from Mycoplasma pneumoniae (strain ATCC 29342 / M129 / Subtype 1) (Mycoplasmoides pneumoniae).